We begin with the raw amino-acid sequence, 62 residues long: MAMCEVCGKKVAFGNKVSHSNKKSRRTWKPNVKKIKVLLQNGQRKRIYVCTSCIKAGKVVRA.

It belongs to the bacterial ribosomal protein bL28 family.

This is Large ribosomal subunit protein bL28 from Caldicellulosiruptor bescii (strain ATCC BAA-1888 / DSM 6725 / KCTC 15123 / Z-1320) (Anaerocellum thermophilum).